We begin with the raw amino-acid sequence, 685 residues long: Small ribosomal subunit protein mS39 (685 aa).

The transit peptide at 1–10 (MAAAAVAARR) directs the protein to the mitochondrion. Residue lysine 127 is modified to N6-acetyllysine. PPR repeat units follow at residues 150–184 (IEDVSEAALEERIRLRKVRASVDMFDQLLQAGTTV), 185–220 (SLETTNSLLDLLCYYGDQEPPADYPFQQTEHLENLE), 254–288 (NARSYCTMIRGMVKHRAYAQALNVYTELLNNRLSA), 289–329 (DVYT…KVKP), 330–366 (NLQTFNTILKGLRKCYSLGRIPALQILREMKHIGIEP), 367–407 (SLAT…TFSP), 412–446 (DGRFFQLAMSVCSSLRDLELAYQVHRLLNTGDNRK), 454–488 (RKVYYSKFFSLICSLEQIDVTLKWYKDLIPSVFLP), 489–523 (HYQIFIGLLQALDVANRLELVPQIWKDSKEYSHTF), and 572–606 (PANPLQYIAVLFLRGGRSQEAWKMLELFKKHKKIP). The segment at 663–685 (LGNLTELNSSDGESSSDSDSDDK) is disordered. Positions 676–685 (SSSDSDSDDK) are enriched in acidic residues.

The protein belongs to the mitochondrion-specific ribosomal protein mS39 family. Component of the mitochondrial ribosome small subunit (28S) which comprises a 12S rRNA and about 30 distinct proteins. Associated with the 12S mitochondrial rRNA (12S mt-rRNA).

It localises to the mitochondrion. Functionally, mitochondrial RNA-binding protein that has a role in mitochondrial translation. The protein is Small ribosomal subunit protein mS39 (Ptcd3) of Mus musculus (Mouse).